Consider the following 277-residue polypeptide: Tryptophan synthase alpha chain (277 aa).

Active-site proton acceptor residues include glutamate 51 and glutamate 62.

The protein belongs to the TrpA family. In terms of assembly, tetramer of two alpha and two beta chains.

It catalyses the reaction (1S,2R)-1-C-(indol-3-yl)glycerol 3-phosphate + L-serine = D-glyceraldehyde 3-phosphate + L-tryptophan + H2O. It functions in the pathway amino-acid biosynthesis; L-tryptophan biosynthesis; L-tryptophan from chorismate: step 5/5. In terms of biological role, the alpha subunit is responsible for the aldol cleavage of indoleglycerol phosphate to indole and glyceraldehyde 3-phosphate. The protein is Tryptophan synthase alpha chain of Phenylobacterium zucineum (strain HLK1).